The sequence spans 214 residues: Histidine biosynthesis bifunctional protein HisIE (214 aa).

A phosphoribosyl-AMP cyclohydrolase region spans residues 1–114 (MDLSAVRFDE…LEGEKDLGFV (114 aa)). The interval 115–214 (VGQVYATIKE…RSPYDGSHGN (100 aa)) is phosphoribosyl-ATP pyrophosphohydrolase.

This sequence in the N-terminal section; belongs to the PRA-CH family. The protein in the C-terminal section; belongs to the PRA-PH family.

The protein localises to the cytoplasm. The enzyme catalyses 1-(5-phospho-beta-D-ribosyl)-ATP + H2O = 1-(5-phospho-beta-D-ribosyl)-5'-AMP + diphosphate + H(+). It carries out the reaction 1-(5-phospho-beta-D-ribosyl)-5'-AMP + H2O = 1-(5-phospho-beta-D-ribosyl)-5-[(5-phospho-beta-D-ribosylamino)methylideneamino]imidazole-4-carboxamide. Its pathway is amino-acid biosynthesis; L-histidine biosynthesis; L-histidine from 5-phospho-alpha-D-ribose 1-diphosphate: step 2/9. It functions in the pathway amino-acid biosynthesis; L-histidine biosynthesis; L-histidine from 5-phospho-alpha-D-ribose 1-diphosphate: step 3/9. This is Histidine biosynthesis bifunctional protein HisIE from Thermus thermophilus (strain ATCC BAA-163 / DSM 7039 / HB27).